A 106-amino-acid chain; its full sequence is Protein yippee-like At4g27745 (106 aa).

A Yippee domain is found at 8 to 105 (RLYSCCNCRN…FEKAKIVKED (98 aa)). Cys-12, Cys-15, Cys-68, and Cys-71 together coordinate Zn(2+).

This sequence belongs to the yippee family.

The polypeptide is Protein yippee-like At4g27745 (Arabidopsis thaliana (Mouse-ear cress)).